The primary structure comprises 459 residues: Nuclear hormone receptor family member nhr-11 (459 aa).

Residues 2-81 (GPLCAVCESP…AGMRSELVRS (80 aa)) constitute a DNA-binding region (nuclear receptor). 2 consecutive NR C4-type zinc fingers follow at residues 5-26 (CAVC…CKAC) and 42-69 (CAAD…LRKC). 2 disordered regions span residues 90 to 119 (RRKD…EEMD) and 134 to 162 (DLPL…SSFD). Over residues 97 to 115 (NSDAAPNSNSPSTRQSSSP) the composition is skewed to low complexity. Positions 188 to 458 (ENNSILQYYH…SMLHEMLNFQ (271 aa)) constitute an NR LBD domain.

This sequence belongs to the nuclear hormone receptor family.

It localises to the nucleus. Functionally, orphan nuclear receptor. The polypeptide is Nuclear hormone receptor family member nhr-11 (nhr-11) (Caenorhabditis elegans).